The following is a 157-amino-acid chain: MAELKQLYIFTDGSCLGNPGPGGYGVVMKYKHQQHEIADGFSLTTNNRMELLAPIIALETLYEPCNIILTSDSQYMRQGIMTWIHGWKKKGWITSTKQPVKNVDLWKRLDAVSQLHKIDWHWVKGHAGHIENERCDVLARKAAEAKPQQVDTGYNPE.

The region spanning 3–144 (ELKQLYIFTD…CDVLARKAAE (142 aa)) is the RNase H type-1 domain. Residues Asp-12, Glu-50, Asp-72, and Asp-136 each coordinate Mg(2+).

This sequence belongs to the RNase H family. Monomer. It depends on Mg(2+) as a cofactor.

It localises to the cytoplasm. The catalysed reaction is Endonucleolytic cleavage to 5'-phosphomonoester.. Endonuclease that specifically degrades the RNA of RNA-DNA hybrids. The sequence is that of Ribonuclease H from Shewanella frigidimarina (strain NCIMB 400).